Here is a 302-residue protein sequence, read N- to C-terminus: Proteasome subunit beta (302 aa).

The propeptide at 1-50 is removed in mature form; by autocatalysis; the sequence is MTITGSRGFPDGYLAPGSSFLDFAAQHAPTIMPGTQPTFDTIPQDIAPHG. Catalysis depends on Thr51, which acts as the Nucleophile. The tract at residues 277–302 is disordered; it reads EPGRDGPGNRLPSQGSATIIPESDQS. Residues 287-302 show a composition bias toward polar residues; it reads LPSQGSATIIPESDQS.

Belongs to the peptidase T1B family. In terms of assembly, the 20S proteasome core is composed of 14 alpha and 14 beta subunits that assemble into four stacked heptameric rings, resulting in a barrel-shaped structure. The two inner rings, each composed of seven catalytic beta subunits, are sandwiched by two outer rings, each composed of seven alpha subunits. The catalytic chamber with the active sites is on the inside of the barrel. Has a gated structure, the ends of the cylinder being occluded by the N-termini of the alpha-subunits. Is capped by the proteasome-associated ATPase, ARC.

The protein resides in the cytoplasm. It catalyses the reaction Cleavage of peptide bonds with very broad specificity.. It participates in protein degradation; proteasomal Pup-dependent pathway. The formation of the proteasomal ATPase ARC-20S proteasome complex, likely via the docking of the C-termini of ARC into the intersubunit pockets in the alpha-rings, may trigger opening of the gate for substrate entry. Interconversion between the open-gate and close-gate conformations leads to a dynamic regulation of the 20S proteasome proteolysis activity. In terms of biological role, component of the proteasome core, a large protease complex with broad specificity involved in protein degradation. The sequence is that of Proteasome subunit beta from Jonesia denitrificans (strain ATCC 14870 / DSM 20603 / BCRC 15368 / CIP 55.134 / JCM 11481 / NBRC 15587 / NCTC 10816 / Prevot 55134) (Listeria denitrificans).